A 194-amino-acid polypeptide reads, in one-letter code: Flagellin A2 (194 aa).

Positions 1-12 (MFEFITDEDERG) are excised as a propeptide.

This sequence belongs to the archaeal flagellin family. Glycosylated.

Its subcellular location is the archaeal flagellum. Functionally, flagellin is the subunit protein which polymerizes to form the filaments of archaeal flagella. In Halobacterium salinarum (strain ATCC 700922 / JCM 11081 / NRC-1) (Halobacterium halobium), this protein is Flagellin A2 (flaA2).